We begin with the raw amino-acid sequence, 296 residues long: MSDEQIKLVIVTGMSGAGKTVAIQSFEDLGYFTIDNMPPTLVPKFLELAAQSGDTSKIAMVVDMRSRLFFREINSILDSLEINDNINFKILFLDATDTELVSRYKETRRSHPLAADGRVLDGISLERELLAPLKSMSQNVVDTSELTPRQLRKVISKEFSNQDSQSSFRIEVMSFGFKYGIPLDADLVFDVRFLPNPYYKPELRDKTGLDTEVYDYVMSFDESDDFYDHLLALIKPILPGYQNEGKSVLTVAIGCTGGQHRSTAFAHRLSEDLKADWTVNESHRDKNKRKETVNRS.

13–20 (GMSGAGKT) is an ATP binding site. Residue 63-66 (DMRS) participates in GTP binding.

Belongs to the RapZ-like family.

Its function is as follows. Displays ATPase and GTPase activities. The sequence is that of Nucleotide-binding protein SAG0531 from Streptococcus agalactiae serotype V (strain ATCC BAA-611 / 2603 V/R).